The primary structure comprises 273 residues: Pantothenate synthetase (273 aa).

27-34 lines the ATP pocket; that stretch reads MGALHDGH. His34 acts as the Proton donor in catalysis. Gln58 contributes to the (R)-pantoate binding site. Gln58 lines the beta-alanine pocket. 144 to 147 provides a ligand contact to ATP; the sequence is GKKD. Gln150 lines the (R)-pantoate pocket. Residues Val173 and 181 to 184 contribute to the ATP site; that span reads LSSR.

The protein belongs to the pantothenate synthetase family. In terms of assembly, homodimer.

It is found in the cytoplasm. The catalysed reaction is (R)-pantoate + beta-alanine + ATP = (R)-pantothenate + AMP + diphosphate + H(+). Its pathway is cofactor biosynthesis; (R)-pantothenate biosynthesis; (R)-pantothenate from (R)-pantoate and beta-alanine: step 1/1. Its function is as follows. Catalyzes the condensation of pantoate with beta-alanine in an ATP-dependent reaction via a pantoyl-adenylate intermediate. This Campylobacter concisus (strain 13826) protein is Pantothenate synthetase.